Consider the following 400-residue polypeptide: Calsequestrin-2 (400 aa).

The signal sequence occupies residues 1–19 (MKRTHLFIVGVYVLSSCRA). Position 282 is a phosphotyrosine (Y282). A glycan (N-linked (GlcNAc...) asparagine) is linked at N335. Positions 365 to 400 (VLSGKINTEDDDDEDDDDDNSDEEDNDDSDDDDDDE) are disordered. Positions 373–400 (EDDDDEDDDDDNSDEEDNDDSDDDDDDE) are enriched in acidic residues.

It belongs to the calsequestrin family. Monomer, homodimer and homooligomer. Mostly monomeric in the absence of calcium. Forms higher oligomers in a calcium-dependent manner. Dimers associate to form tetramers, that then form linear homomer chains. Interacts with ASPH and TRDN. Phosphorylation in the C-terminus, probably by CK2, moderately increases calcium buffering capacity. In terms of processing, N-glycosylated.

It is found in the sarcoplasmic reticulum lumen. Calsequestrin is a high-capacity, moderate affinity, calcium-binding protein and thus acts as an internal calcium store in muscle. Calcium ions are bound by clusters of acidic residues at the protein surface, especially at the interface between subunits. Can bind around 60 Ca(2+) ions. Regulates the release of lumenal Ca(2+) via the calcium release channel RYR2; this plays an important role in triggering muscle contraction. Plays a role in excitation-contraction coupling in the heart and in regulating the rate of heart beats. This chain is Calsequestrin-2 (CASQ2), found in Pongo abelii (Sumatran orangutan).